We begin with the raw amino-acid sequence, 480 residues long: Ftsk domain-containing protein YdcQ (480 aa).

The next 2 membrane-spanning stretches (helical) occupy residues 25-45 and 71-91; these read VKLAGAIIFVPVFLLSMFLFW and SVLCSVLIAVGSIVASYFLLF. In terms of domain architecture, FtsK spans 217 to 399; that stretch reads MKHISWQFDK…LGLMSDTGYG (183 aa). 234-241 serves as a coordination point for ATP; sequence GGTGGGKT.

It localises to the cell membrane. The protein is Ftsk domain-containing protein YdcQ (ydcQ) of Bacillus subtilis (strain 168).